Consider the following 324-residue polypeptide: Formimidoylglutamase (324 aa).

Mn(2+)-binding residues include H124, D153, H155, D157, D245, and D247.

The protein belongs to the arginase family. Requires Mn(2+) as cofactor.

It catalyses the reaction N-formimidoyl-L-glutamate + H2O = formamide + L-glutamate. Its pathway is amino-acid degradation; L-histidine degradation into L-glutamate; L-glutamate from N-formimidoyl-L-glutamate (hydrolase route): step 1/1. Its function is as follows. Catalyzes the conversion of N-formimidoyl-L-glutamate to L-glutamate and formamide. The chain is Formimidoylglutamase from Hahella chejuensis (strain KCTC 2396).